Here is a 212-residue protein sequence, read N- to C-terminus: Dephospho-CoA kinase (212 aa).

One can recognise a DPCK domain in the interval 3–207; it reads IIGLTGGIAS…RHLADDPEPG (205 aa). 11–16 provides a ligand contact to ATP; that stretch reads ASGKST.

It belongs to the CoaE family.

Its subcellular location is the cytoplasm. The catalysed reaction is 3'-dephospho-CoA + ATP = ADP + CoA + H(+). Its pathway is cofactor biosynthesis; coenzyme A biosynthesis; CoA from (R)-pantothenate: step 5/5. Functionally, catalyzes the phosphorylation of the 3'-hydroxyl group of dephosphocoenzyme A to form coenzyme A. In Moorella thermoacetica (strain ATCC 39073 / JCM 9320), this protein is Dephospho-CoA kinase.